The chain runs to 248 residues: Triosephosphate isomerase (248 aa).

9–11 (NWK) contributes to the substrate binding site. Histidine 94 serves as the catalytic Electrophile. The active-site Proton acceptor is glutamate 166. Residues glycine 172, serine 212, and 233-234 (GG) contribute to the substrate site.

This sequence belongs to the triosephosphate isomerase family. In terms of assembly, homodimer.

The protein resides in the cytoplasm. It carries out the reaction D-glyceraldehyde 3-phosphate = dihydroxyacetone phosphate. It participates in carbohydrate biosynthesis; gluconeogenesis. The protein operates within carbohydrate degradation; glycolysis; D-glyceraldehyde 3-phosphate from glycerone phosphate: step 1/1. In terms of biological role, involved in the gluconeogenesis. Catalyzes stereospecifically the conversion of dihydroxyacetone phosphate (DHAP) to D-glyceraldehyde-3-phosphate (G3P). This Clostridium botulinum (strain Langeland / NCTC 10281 / Type F) protein is Triosephosphate isomerase.